The chain runs to 294 residues: RAB7A-interacting MON1-CCZ1 complex subunit 1 (294 aa).

The residue at position 2 (Ala-2) is an N-acetylalanine.

Belongs to the RIMOC1 family. As to quaternary structure, interacts with the MON1A-CCZ1B complex. Interacts with GDP-bound RAB7A and promotes its interaction with the MON1A-CCZ1B complex.

It is found in the cytoplasm. It localises to the cytosol. Functionally, plays an important role in the removal of damaged mitochondria via mitophagy by controlling the stability and localization of RAB7A. Required for the recruitment of RAB7A and ATG9A vesicles to damaged mitochondria and promotes the stability of RAB7A by inhibiting its proteasomal degradation during mitophagy. The chain is RAB7A-interacting MON1-CCZ1 complex subunit 1 from Mus musculus (Mouse).